Here is an 89-residue protein sequence, read N- to C-terminus: HssA/B-like protein 10 (89 aa).

The protein belongs to the hssA/B family.

This is HssA/B-like protein 10 (hssl10) from Dictyostelium discoideum (Social amoeba).